The primary structure comprises 202 residues: Cytochrome c oxidase assembly protein CtaG (202 aa).

Residues methionine 1–asparagine 14 lie on the Cytoplasmic side of the membrane. The chain crosses the membrane as a helical; Signal-anchor for type II membrane protein span at residues asparagine 15–valine 37. Residues proline 38–leucine 202 lie on the Periplasmic side of the membrane.

Belongs to the COX11/CtaG family.

It localises to the cell inner membrane. Exerts its effect at some terminal stage of cytochrome c oxidase synthesis, probably by being involved in the insertion of the copper B into subunit I. The sequence is that of Cytochrome c oxidase assembly protein CtaG from Rhizobium etli (strain ATCC 51251 / DSM 11541 / JCM 21823 / NBRC 15573 / CFN 42).